The primary structure comprises 41 residues: Probable cinnamyl alcohol dehydrogenase 2 (41 aa).

Belongs to the zinc-containing alcohol dehydrogenase family. Requires Zn(2+) as cofactor.

The catalysed reaction is (E)-cinnamyl alcohol + NADP(+) = (E)-cinnamaldehyde + NADPH + H(+). It catalyses the reaction (E)-coniferol + NADP(+) = (E)-coniferaldehyde + NADPH + H(+). It carries out the reaction (E)-sinapyl alcohol + NADP(+) = (E)-sinapaldehyde + NADPH + H(+). The enzyme catalyses (E)-4-coumaroyl alcohol + NADP(+) = (E)-4-coumaraldehyde + NADPH + H(+). The catalysed reaction is (E)-caffeyl alcohol + NADP(+) = (E)-caffeyl aldehyde + NADPH + H(+). The protein operates within aromatic compound metabolism; phenylpropanoid biosynthesis. Functionally, involved in lignin biosynthesis. Catalyzes the final step specific for the production of lignin monomers, like coniferyl alcohol, sinapyl alcohol and 4-coumaryl alcohol. The sequence is that of Probable cinnamyl alcohol dehydrogenase 2 from Pseudotsuga menziesii (Douglas-fir).